The chain runs to 88 residues: MSKIRGNRKTRVGVVISDKMDKTVVVKVDQMVKHPIYKKYIKRRVTFKAHDEENRCNVGDKVSVVETRPLSRDKRWRVREILEKNVIL.

The protein belongs to the universal ribosomal protein uS17 family. Part of the 30S ribosomal subunit.

Functionally, one of the primary rRNA binding proteins, it binds specifically to the 5'-end of 16S ribosomal RNA. The protein is Small ribosomal subunit protein uS17 of Syntrophotalea carbinolica (strain DSM 2380 / NBRC 103641 / GraBd1) (Pelobacter carbinolicus).